A 133-amino-acid polypeptide reads, in one-letter code: Holo-[acyl-carrier-protein] synthase (133 aa).

Aspartate 8 and glutamate 57 together coordinate Mg(2+).

This sequence belongs to the P-Pant transferase superfamily. AcpS family. Mg(2+) is required as a cofactor.

Its subcellular location is the cytoplasm. The catalysed reaction is apo-[ACP] + CoA = holo-[ACP] + adenosine 3',5'-bisphosphate + H(+). In terms of biological role, transfers the 4'-phosphopantetheine moiety from coenzyme A to a Ser of acyl-carrier-protein. The protein is Holo-[acyl-carrier-protein] synthase of Chelativorans sp. (strain BNC1).